The primary structure comprises 148 residues: Large ribosomal subunit protein uL15 (148 aa).

Positions 1 to 30 (MTHSKRNTRKLRGHVSHGHGRVGKHRKHPG) are enriched in basic residues. Residues 1–38 (MTHSKRNTRKLRGHVSHGHGRVGKHRKHPGGRGMAGPE) are disordered.

This sequence belongs to the universal ribosomal protein uL15 family.

The chain is Large ribosomal subunit protein uL15 (RPL27A) from Euplotes crassus.